The primary structure comprises 205 residues: MAASSLTVTLGRLASACSHSILRPSGPGAASLWSASRRFNSQSTSYLPGYVPKTSLSSPPWPEVVLPDPVEETRHHAEVVKKVNEMIVTGQYGRLFAVVHFASRQWKVTSEDLILIGNELDLACGERIRLEKVLLVGADNFTLLGKPLLGKDLVRVEATVIEKTESWPRIIMRFRKRKNFKKKRIVTTPQTVLRINSIEIAPCLL.

The N-terminal 39 residues, 1–39, are a transit peptide targeting the mitochondrion; the sequence is MAASSLTVTLGRLASACSHSILRPSGPGAASLWSASRRF.

It belongs to the bacterial ribosomal protein bL21 family. Component of the mitochondrial large ribosomal subunit (mt-LSU). Mature mammalian 55S mitochondrial ribosomes consist of a small (28S) and a large (39S) subunit. The 28S small subunit contains a 12S ribosomal RNA (12S mt-rRNA) and 30 different proteins. The 39S large subunit contains a 16S rRNA (16S mt-rRNA), a copy of mitochondrial valine transfer RNA (mt-tRNA(Val)), which plays an integral structural role, and 52 different proteins.

It is found in the mitochondrion. The protein is Large ribosomal subunit protein bL21m (MRPL21) of Homo sapiens (Human).